Here is a 382-residue protein sequence, read N- to C-terminus: 3-ketosteroid-9-alpha-monooxygenase, oxygenase component (382 aa).

The 103-residue stretch at 20–122 (WHCLGLSRTF…TMEKHGQLFV (103 aa)) folds into the Rieske domain. [2Fe-2S] cluster-binding residues include Cys-61, His-63, Cys-80, and His-83. Fe cation contacts are provided by Asn-169, His-175, His-180, and Asp-298.

As to quaternary structure, homotrimer. The two-component system 3-ketosteroid-9-alpha-monooxygenase is composed of an oxygenase component KshA and a reductase component KshB. [2Fe-2S] cluster serves as cofactor. Fe cation is required as a cofactor.

It carries out the reaction androsta-1,4-diene-3,17-dione + 2 reduced [2Fe-2S]-[ferredoxin] + O2 + 2 H(+) = 9alpha-hydroxyandrosta-1,4-diene-3,17-dione + 2 oxidized [2Fe-2S]-[ferredoxin] + H2O. Its function is as follows. In vitro, catalyzes the introduction of a 9alpha-hydroxyl moiety into the ring B of 3-ketosteroid substrates such as 1,4-androstadiene-3,17-dione (ADD), 4-androstene-3,17-dione (AD), 4-androstene-17beta-ol-3-one (testosterone), 4-pregnene-3,20-dione (progesterone), 23,24-bisnorcholesta-4-ene-22-oate and 23,24-bisnorcholesta-1,4-diene-22-oate. The protein is 3-ketosteroid-9-alpha-monooxygenase, oxygenase component of Rhodococcus rhodochrous.